The sequence spans 319 residues: Acetyl-coenzyme A carboxylase carboxyl transferase subunit alpha (319 aa).

The CoA carboxyltransferase C-terminal domain occupies Ala-38–Glu-292.

Belongs to the AccA family. As to quaternary structure, acetyl-CoA carboxylase is a heterohexamer composed of biotin carboxyl carrier protein (AccB), biotin carboxylase (AccC) and two subunits each of ACCase subunit alpha (AccA) and ACCase subunit beta (AccD).

It is found in the cytoplasm. The enzyme catalyses N(6)-carboxybiotinyl-L-lysyl-[protein] + acetyl-CoA = N(6)-biotinyl-L-lysyl-[protein] + malonyl-CoA. The protein operates within lipid metabolism; malonyl-CoA biosynthesis; malonyl-CoA from acetyl-CoA: step 1/1. In terms of biological role, component of the acetyl coenzyme A carboxylase (ACC) complex. First, biotin carboxylase catalyzes the carboxylation of biotin on its carrier protein (BCCP) and then the CO(2) group is transferred by the carboxyltransferase to acetyl-CoA to form malonyl-CoA. The protein is Acetyl-coenzyme A carboxylase carboxyl transferase subunit alpha of Cereibacter sphaeroides (strain ATCC 17029 / ATH 2.4.9) (Rhodobacter sphaeroides).